The following is a 605-amino-acid chain: Aspartate--tRNA(Asp/Asn) ligase (605 aa).

Glu-183 contacts L-aspartate. Residues 207 to 210 (QLFK) are aspartate. Arg-229 is an L-aspartate binding site. Residues 229-231 (RDE) and Gln-238 each bind ATP. Residue His-457 coordinates L-aspartate. Glu-497 is an ATP binding site. Arg-504 contributes to the L-aspartate binding site. An ATP-binding site is contributed by 549–552 (GLDR).

It belongs to the class-II aminoacyl-tRNA synthetase family. Type 1 subfamily. In terms of assembly, homodimer.

It is found in the cytoplasm. It carries out the reaction tRNA(Asx) + L-aspartate + ATP = L-aspartyl-tRNA(Asx) + AMP + diphosphate. Aspartyl-tRNA synthetase with relaxed tRNA specificity since it is able to aspartylate not only its cognate tRNA(Asp) but also tRNA(Asn). Reaction proceeds in two steps: L-aspartate is first activated by ATP to form Asp-AMP and then transferred to the acceptor end of tRNA(Asp/Asn). The polypeptide is Aspartate--tRNA(Asp/Asn) ligase (Persephonella marina (strain DSM 14350 / EX-H1)).